Reading from the N-terminus, the 264-residue chain is Stage IV sporulation protein FA (264 aa).

Positions 1 to 10 (MSHRADEIRK) are enriched in basic and acidic residues. A disordered region spans residues 1–37 (MSHRADEIRKRLEKRRKQLSGSKRFSTQTVSEKQKPP). The Mother cell cytoplasmic segment spans residues 1-72 (MSHRADEIRK…GKHPLVKTDS (72 aa)). Over residues 19 to 31 (LSGSKRFSTQTVS) the composition is skewed to polar residues. Residues 73 to 90 (IILKCLLSACLVLVSAIA) traverse the membrane as a helical segment. Over 91–264 (YKTNIGPVSQ…IDPIQVISFE (174 aa)) the chain is Forespore intermembrane space.

In terms of assembly, forms a complex with BofA and SpoIVFB localized in the mother-cell membrane surrounding the forespore. Post-translationally, may be degraded by FtsH. It is stabilized by an ftsH disruption mutant, and in a probably independent fashion, by overexpression of BofA.

It is found in the forespore outer membrane. Implicated in the coupling of mother cell to forespore gene expression. Required for spore formation at 37 degrees Celsius, but not at 30 degrees Celsius. SpoIVFA plays a central role in both maintaining the SpoIVFA/BofA/SpoIVFB complex and anchoring it to the outer forespore membrane. SpoIVFA brings BofA into close proximity to SpoIVFB, allowing BofA to inhibit SpoIVFB. Increased accumulation of SpoIVFA seems to inhibit the activity of SpoIVFB and thus regulates the activation of sigma-K. The sequence is that of Stage IV sporulation protein FA (spoIVFA) from Bacillus subtilis (strain 168).